Here is a 589-residue protein sequence, read N- to C-terminus: Mitogen-activated protein kinase 8 (589 aa).

Positions 18–56 (RPSSSSSSSSSNNNNNNHEQPIFNSSSFSSSSNPNHSAN) are disordered. Low complexity-rich tracts occupy residues 20 to 34 (SSSS…NNNN) and 41 to 56 (NSSS…HSAN). In terms of domain architecture, Protein kinase spans 104–395 (YQIQEVVGKG…AEDALADPYF (292 aa)). ATP contacts are provided by residues 110 to 118 (VGKGSYGVV) and lysine 133. Catalysis depends on aspartate 230, which acts as the Proton acceptor. At threonine 266 the chain carries Phosphothreonine. A TXY motif is present at residues 266–268 (TDY). Tyrosine 268 bears the Phosphotyrosine mark. Threonine 271 is modified (phosphothreonine). Positions 474–589 (NQGKPGAAGG…TDKVASLHNS (116 aa)) are disordered.

It belongs to the protein kinase superfamily. CMGC Ser/Thr protein kinase family. MAP kinase subfamily. Interacts with CAM3, CAM4 and CAM7 in an calcium-dependent manner. Post-translationally, dually phosphorylated on Thr-266 and Tyr-268, which activates the enzyme. Autophosphorylated. In terms of tissue distribution, ubiquitous.

The enzyme catalyses L-seryl-[protein] + ATP = O-phospho-L-seryl-[protein] + ADP + H(+). It catalyses the reaction L-threonyl-[protein] + ATP = O-phospho-L-threonyl-[protein] + ADP + H(+). With respect to regulation, activated by threonine and tyrosine phosphorylation. Activated by two independent mechanisms, the binding of CAMs in a calcium-dependent manner and the phosphorylation by MAP kinase kinase MKK3. Activated in response to mechanical wounding, hydrogen peroxide and jasmonic acid (JA). Functionally, MKK3-MPK8 and CAMs-MPK8 modules negatively regulates ROS accumulation through controlling expression of the RBOHD gene during wounding. The polypeptide is Mitogen-activated protein kinase 8 (MPK8) (Arabidopsis thaliana (Mouse-ear cress)).